The sequence spans 83 residues: Bowman-Birk type proteinase inhibitor (83 aa).

Disulfide bonds link C18–C72, C19–C34, C22–C68, C24–C32, C42–C49, C46–C61, and C51–C59.

This sequence belongs to the Bowman-Birk serine protease inhibitor family.

In Phaseolus lunatus (Lima bean), this protein is Bowman-Birk type proteinase inhibitor.